The sequence spans 113 residues: Large ribosomal subunit protein bL19 (113 aa).

It belongs to the bacterial ribosomal protein bL19 family.

In terms of biological role, this protein is located at the 30S-50S ribosomal subunit interface and may play a role in the structure and function of the aminoacyl-tRNA binding site. This Mycobacterium bovis (strain ATCC BAA-935 / AF2122/97) protein is Large ribosomal subunit protein bL19 (rplS).